The following is a 970-amino-acid chain: UvrABC system protein A (970 aa).

Position 34-41 (34-41 (GVSGSGKS)) interacts with ATP. The C4-type zinc finger occupies 284 to 311 (CPEHGAVMDELSPRLFSFNSPYGACPDC). ABC transporter domains follow at residues 340-617 (WSEK…QRSL) and 637-965 (GNGA…KYLA). 669-676 (GVSGSGKS) is an ATP binding site. The segment at 768–794 (CEACAGQGVNVIEMNFLPDVYVQCDVC) adopts a C4-type zinc-finger fold.

It belongs to the ABC transporter superfamily. UvrA family. As to quaternary structure, forms a heterotetramer with UvrB during the search for lesions.

It is found in the cytoplasm. In terms of biological role, the UvrABC repair system catalyzes the recognition and processing of DNA lesions. UvrA is an ATPase and a DNA-binding protein. A damage recognition complex composed of 2 UvrA and 2 UvrB subunits scans DNA for abnormalities. When the presence of a lesion has been verified by UvrB, the UvrA molecules dissociate. The chain is UvrABC system protein A from Synechocystis sp. (strain ATCC 27184 / PCC 6803 / Kazusa).